Consider the following 176-residue polypeptide: Cytochrome b561 homolog 1 (176 aa).

Over 1-7 (MNRFSKT) the chain is Cytoplasmic. A helical membrane pass occupies residues 8 to 28 (QIYLHWITLLFVAITYAAMEL). Residue His-12 participates in heme b binding. The Periplasmic portion of the chain corresponds to 29–45 (RGWFPKGSSTYLLMRET). His-46 contributes to the heme b binding site. The helical transmembrane segment at 46-63 (HYNAGIFVWVLMFSRLII) threads the bilayer. The Cytoplasmic segment spans residues 64-85 (KHRYSDPSIVPPPPAWQMKAAS). A helical membrane pass occupies residues 86–106 (LMHIMLYITFLALPLLGIALM). The Periplasmic segment spans residues 107–141 (AYSGKSWSFLGFNVSPFVTPNSEIKALIKNIHETW). Residues His-138 and His-152 each contribute to the heme b site. The chain crosses the membrane as a helical span at residues 142–162 (ANIGYFLIAAHAGAALFHHYI). Residues 163–176 (QKDNTLLRMMPRRK) lie on the Cytoplasmic side of the membrane.

The protein belongs to the cytochrome b561 family. It depends on heme b as a cofactor.

The protein localises to the cell inner membrane. The chain is Cytochrome b561 homolog 1 (yodB) from Escherichia coli (strain K12).